A 249-amino-acid polypeptide reads, in one-letter code: Ribitol 2-dehydrogenase (249 aa).

20–43 provides a ligand contact to NAD(+); sequence TGAASGIGLECARTLLGAGAKVVL. Tyr-160 functions as the Proton acceptor in the catalytic mechanism.

Belongs to the short-chain dehydrogenases/reductases (SDR) family. In terms of assembly, homotetramer.

The enzyme catalyses ribitol + NAD(+) = D-ribulose + NADH + H(+). The protein is Ribitol 2-dehydrogenase (rbtD) of Klebsiella aerogenes (Enterobacter aerogenes).